The primary structure comprises 856 residues: DNA mismatch repair protein MutS (856 aa).

Residue 618 to 625 (GPNMGGKS) coordinates ATP.

It belongs to the DNA mismatch repair MutS family.

In terms of biological role, this protein is involved in the repair of mismatches in DNA. It is possible that it carries out the mismatch recognition step. This protein has a weak ATPase activity. The protein is DNA mismatch repair protein MutS of Shewanella baltica (strain OS195).